The primary structure comprises 457 residues: NAC domain-containing protein 69 (457 aa).

The NAC domain occupies 4 to 153 (DLVGYRFYPT…NYVICQVMYK (150 aa)). A DNA-binding region spans residues 107 to 159 (IGIKKTLVYYEGRVPKGVWTPWVMHEYHITCLPQDQRNYVICQVMYKGEDGDV). Disordered stretches follow at residues 158–180 (DVPSGGNNSSEPSQSLVSDSNTV) and 302–332 (DSNSDAESISATSYQGTSSPGDDSVGSSNRQ). A compositionally biased stretch (polar residues) spans 162–180 (GGNNSSEPSQSLVSDSNTV). Residues 302-311 (DSNSDAESIS) are compositionally biased toward low complexity. The segment covering 312–332 (ATSYQGTSSPGDDSVGSSNRQ) has biased composition (polar residues). A helical membrane pass occupies residues 421-441 (IYLMRMIIGFILLLALISNII).

It is found in the membrane. The protein localises to the nucleus. Transcription activator activated by proteolytic cleavage through regulated intramembrane proteolysis (RIP). Involved in salt stress response during seed germination and seedling growth. Binds the auxin-responsive IAA30 gene promoter and may serve as a molecular link that interconnects a developmental feedback loop of auxin signaling with a salt signal transduction pathway during seed germination. This Arabidopsis thaliana (Mouse-ear cress) protein is NAC domain-containing protein 69 (NAC69).